A 136-amino-acid polypeptide reads, in one-letter code: Small ribosomal subunit protein uS19 (136 aa).

The protein belongs to the universal ribosomal protein uS19 family.

Protein S19 forms a complex with S13 that binds strongly to the 16S ribosomal RNA. The chain is Small ribosomal subunit protein uS19 from Methanocorpusculum labreanum (strain ATCC 43576 / DSM 4855 / Z).